The chain runs to 328 residues: Phenylalanine--tRNA ligase alpha subunit (328 aa).

Glu253 lines the Mg(2+) pocket.

The protein belongs to the class-II aminoacyl-tRNA synthetase family. Phe-tRNA synthetase alpha subunit type 1 subfamily. In terms of assembly, tetramer of two alpha and two beta subunits. Requires Mg(2+) as cofactor.

The protein localises to the cytoplasm. It carries out the reaction tRNA(Phe) + L-phenylalanine + ATP = L-phenylalanyl-tRNA(Phe) + AMP + diphosphate + H(+). This is Phenylalanine--tRNA ligase alpha subunit from Chromobacterium violaceum (strain ATCC 12472 / DSM 30191 / JCM 1249 / CCUG 213 / NBRC 12614 / NCIMB 9131 / NCTC 9757 / MK).